Consider the following 196-residue polypeptide: Early light-induced protein, chloroplastic (196 aa).

A chloroplast-targeting transit peptide spans Met1 to Met48. The segment covering Ser47–Ser57 has biased composition (basic and acidic residues). The segment at Ser47 to Pro81 is disordered. Transmembrane regions (helical) follow at residues Leu105 to Ser125, Gly132 to Phe152, and Ile176 to Val196.

It belongs to the ELIP/psbS family.

The protein localises to the plastid. Its subcellular location is the chloroplast membrane. Probably involved in the integration of pigments into the mature pigment-protein complexes. The sequence is that of Early light-induced protein, chloroplastic from Pisum sativum (Garden pea).